The chain runs to 239 residues: MPRSKRSKLVTLAQTDKKGRENKERIFDEVREALDTYKYVFVLQLDDVRTPVLQEIREAWVGSKLLMGKRKVLEKALGTTREQEYKENLSKLTKYCSGVIGLLFTNETLDTVKEYFEAYSRLDYSRPNSRAPITFEVPEGIVYSRGGQIPIEEDVPMAHSLEPTLRNKYEMPTKIKAGKITLEAPYLVCKEGQKLDVRQALILKQFGVALAQFKVIISAYYDNESSTVSELNINKKQDA.

Belongs to the universal ribosomal protein uL10 family. As to quaternary structure, associates with the pre-60S ribosomal particle.

It is found in the nucleus. The protein resides in the nucleolus. It localises to the cytoplasm. In terms of biological role, component of the ribosome assembly machinery. Nuclear paralog of the ribosomal protein P0, it binds pre-60S subunits at an early stage of assembly in the nucleolus, and is replaced by P0 in cytoplasmic pre-60S subunits and mature 80S ribosomes. The sequence is that of Ribosome assembly factor mrt4 from Candida glabrata (strain ATCC 2001 / BCRC 20586 / JCM 3761 / NBRC 0622 / NRRL Y-65 / CBS 138) (Yeast).